We begin with the raw amino-acid sequence, 539 residues long: GMP synthase [glutamine-hydrolyzing] (539 aa).

One can recognise a Glutamine amidotransferase type-1 domain in the interval 4–202; it reads KILILDFGSQ…VLQIAGAKPD (199 aa). Cys-81 acts as the Nucleophile in catalysis. Active-site residues include His-176 and Glu-178. Positions 203–395 constitute a GMPS ATP-PPase domain; sequence WIMKNHIEEA…LGLPPEMVYR (193 aa). An ATP-binding site is contributed by 230–236; the sequence is SGGVDSS.

As to quaternary structure, homodimer.

The enzyme catalyses XMP + L-glutamine + ATP + H2O = GMP + L-glutamate + AMP + diphosphate + 2 H(+). The protein operates within purine metabolism; GMP biosynthesis; GMP from XMP (L-Gln route): step 1/1. In terms of biological role, catalyzes the synthesis of GMP from XMP. The protein is GMP synthase [glutamine-hydrolyzing] of Burkholderia vietnamiensis (strain G4 / LMG 22486) (Burkholderia cepacia (strain R1808)).